Here is a 273-residue protein sequence, read N- to C-terminus: Protein BMH2 (273 aa).

Position 2 is an N-acetylserine (S2). The disordered stretch occupies residues 236–273 (DISESGQEDQQQQQQQQQQQQQQQQQAPAEQTQGEPTK). Residues 245 to 261 (QQQQQQQQQQQQQQQQQ) are compositionally biased toward low complexity. Residues 262 to 273 (APAEQTQGEPTK) are compositionally biased toward polar residues.

It belongs to the 14-3-3 family. As to quaternary structure, interacts with NTH1 (via N-terminus when phosphorylated by PKA); the interaction is direct and activates NTH1. Interacts with FIN1.

It localises to the cytoplasm. The protein localises to the nucleus. In Saccharomyces cerevisiae (strain ATCC 204508 / S288c) (Baker's yeast), this protein is Protein BMH2 (BMH2).